The chain runs to 115 residues: Glutaredoxin 4 (115 aa).

One can recognise a Glutaredoxin domain in the interval 5-107 (IEKIQRQIAE…QLIKETAAKY (103 aa)). Residue K22 coordinates glutathione. [2Fe-2S] cluster is bound at residue C30. Glutathione is bound by residues R59, F71, and 84 to 85 (CD).

The protein belongs to the glutaredoxin family. Monothiol subfamily. In terms of assembly, homodimer.

Its subcellular location is the cytoplasm. Its function is as follows. Monothiol glutaredoxin involved in the biogenesis of iron-sulfur clusters. The chain is Glutaredoxin 4 (grxD) from Shigella flexneri.